Reading from the N-terminus, the 287-residue chain is ATP synthase gamma chain (287 aa).

It belongs to the ATPase gamma chain family. In terms of assembly, F-type ATPases have 2 components, CF(1) - the catalytic core - and CF(0) - the membrane proton channel. CF(1) has five subunits: alpha(3), beta(3), gamma(1), delta(1), epsilon(1). CF(0) has three main subunits: a, b and c.

The protein resides in the cell inner membrane. Functionally, produces ATP from ADP in the presence of a proton gradient across the membrane. The gamma chain is believed to be important in regulating ATPase activity and the flow of protons through the CF(0) complex. The protein is ATP synthase gamma chain of Marinobacter nauticus (strain ATCC 700491 / DSM 11845 / VT8) (Marinobacter aquaeolei).